We begin with the raw amino-acid sequence, 1976 residues long: Myosin-10 (1976 aa).

Arg-18 bears the Omega-N-methylarginine mark. The Myosin N-terminal SH3-like domain maps to 31 to 81 (TAKKLVWIPSERHGFEAASIKEERGDEVMVELAENGKKAMVNKDDIQKMNP). The 699-residue stretch at 85 to 783 (SKVEDMAELT…VLAHLEEERD (699 aa)) folds into the Myosin motor domain. 178-185 (GESGAGKT) serves as a coordination point for ATP. Leu-214 carries the phosphoserine modification. Position 442 is an N6-acetyllysine (Lys-442). The actin-binding stretch occupies residues 661–683 (LTKLMATLRNTNPNFVRCIIPNH). The IQ domain occupies 786–815 (ITDIIIFFQAVCRGYLARKAFAKKQQQLSA). Residues 845–1976 (LQVTRQEEEL…VNETQPPQSE (1132 aa)) adopt a coiled-coil conformation. A disordered region spans residues 1127-1147 (FESEKASRNKAEKQKRDLSEE). The segment covering 1129-1147 (SEKASRNKAEKQKRDLSEE) has biased composition (basic and acidic residues). Residue Ser-1145 is modified to Phosphoserine. N6-acetyllysine occurs at positions 1241, 1301, and 1645. Disordered regions lie at residues 1697–1728 (ASSE…SALL) and 1872–1976 (MEKA…PQSE). Positions 1698–1708 (SSERARRHAEQ) are enriched in basic and acidic residues. Arg-1930 carries the post-translational modification Omega-N-methylarginine. Phosphoserine occurs at positions 1935, 1937, 1938, and 1939. At Arg-1940 the chain carries Omega-N-methylarginine. Phosphoserine is present on residues Ser-1952 and Ser-1956. A Phosphothreonine modification is found at Thr-1960. A compositionally biased stretch (polar residues) spans 1967 to 1976 (VNETQPPQSE). Ser-1975 bears the Phosphoserine mark.

Belongs to the TRAFAC class myosin-kinesin ATPase superfamily. Myosin family. In terms of assembly, myosin is a hexameric protein that consists of 2 heavy chain subunits (MHC), 2 alkali light chain subunits (MLC) and 2 regulatory light chain subunits (MLC-2). Interacts with PLEKHG6. Interacts with ECPAS. Interacts with KIF26B. Interacts with LARP6. Interacts with MCC. Interacts with CFAP95. As to quaternary structure, (Microbial infection) Interacts with herpes simplex virus 1/HHV-1 envelope glycoprotein B. Phosphorylated by ABL2. Isoform 1 is expressed in cerebellum and spinal chord. Isoform 2 is expressed in cerebrum and retina. Isoform 3 is expressed in the cerebrum and to a much lower extent in cerebellum.

It localises to the cell projection. The protein localises to the lamellipodium. The protein resides in the cell membrane. In terms of biological role, cellular myosin that appears to play a role in cytokinesis, cell shape, and specialized functions such as secretion and capping. Involved with LARP6 in the stabilization of type I collagen mRNAs for CO1A1 and CO1A2. During cell spreading, plays an important role in cytoskeleton reorganization, focal contacts formation (in the central part but not the margins of spreading cells), and lamellipodial extension; this function is mechanically antagonized by MYH9. Its function is as follows. (Microbial infection) Acts as a receptor for herpes simplex virus 1/HHV-1 envelope glycoprotein B. The protein is Myosin-10 (MYH10) of Homo sapiens (Human).